We begin with the raw amino-acid sequence, 399 residues long: Acetate kinase (399 aa).

Asparagine 7 contacts Mg(2+). Lysine 14 is an ATP binding site. Arginine 91 is a substrate binding site. Aspartate 148 (proton donor/acceptor) is an active-site residue. ATP is bound by residues 208–212, 283–285, and 331–335; these read HIGNG, DMR, and GVGEN. Glutamate 385 lines the Mg(2+) pocket.

It belongs to the acetokinase family. As to quaternary structure, homodimer. The cofactor is Mg(2+). Mn(2+) serves as cofactor.

It localises to the cytoplasm. It carries out the reaction acetate + ATP = acetyl phosphate + ADP. Its pathway is metabolic intermediate biosynthesis; acetyl-CoA biosynthesis; acetyl-CoA from acetate: step 1/2. In terms of biological role, catalyzes the formation of acetyl phosphate from acetate and ATP. Can also catalyze the reverse reaction. The protein is Acetate kinase of Bacteroides thetaiotaomicron (strain ATCC 29148 / DSM 2079 / JCM 5827 / CCUG 10774 / NCTC 10582 / VPI-5482 / E50).